The chain runs to 116 residues: ATP-dependent Clp protease adapter protein ClpS (116 aa).

A compositionally biased stretch (polar residues) spans 1-11; sequence MRRFNTIMQGK. The interval 1–23 is disordered; sequence MRRFNTIMQGKTNGGNGPESGTV.

This sequence belongs to the ClpS family. Binds to the N-terminal domain of the chaperone ClpA.

Functionally, involved in the modulation of the specificity of the ClpAP-mediated ATP-dependent protein degradation. This chain is ATP-dependent Clp protease adapter protein ClpS, found in Brucella melitensis biotype 2 (strain ATCC 23457).